We begin with the raw amino-acid sequence, 462 residues long: GTPase Der (462 aa).

EngA-type G domains follow at residues 9–171 (KTIA…GLTK) and 201–372 (IQVG…ECFS). Residues 15–22 (GQPNVGKS), 62–66 (DTGGM), 123–126 (NKID), 207–214 (GRVNVGKS), 254–258 (DTAGI), and 318–321 (NKWD) contribute to the GTP site. The KH-like domain occupies 373–457 (KRIPTSLLNS…PLIINAKDKK (85 aa)).

It belongs to the TRAFAC class TrmE-Era-EngA-EngB-Septin-like GTPase superfamily. EngA (Der) GTPase family. In terms of assembly, associates with the 50S ribosomal subunit.

Functionally, GTPase that plays an essential role in the late steps of ribosome biogenesis. This Helicobacter acinonychis (strain Sheeba) protein is GTPase Der.